We begin with the raw amino-acid sequence, 116 residues long: U16-barytoxin-Tl1c (116 aa).

Positions 1-20 (MKTIIVFLSLLVLATKFGDA) are cleaved as a signal peptide. A propeptide spanning residues 21 to 76 (NEGVNQEQMKEVIQNEFREDFLNEMAPMSLLQQLEAIESTLLEKEADRNSRQKRCN) is cleaved from the precursor. 3 disulfide bridges follow: Cys-75-Cys-90, Cys-82-Cys-95, and Cys-89-Cys-110.

It belongs to the neurotoxin 14 (magi-1) family. 06 (ICK-Trit) subfamily. As to expression, expressed by the venom gland.

It localises to the secreted. Functionally, ion channel inhibitor. The chain is U16-barytoxin-Tl1c from Trittame loki (Brush-footed trapdoor spider).